The sequence spans 66 residues: U-limacoditoxin(59)-Dv128 (66 aa).

An N-terminal signal peptide occupies residues 1–20; sequence MRHLLVLLLICLSVIAMAQA. The 3 X 16 AA tandem repeats of [FI]-G-G-G-L-G-G-A-V-G-G-R-R-R-R-D stretch occupies residues 21–66; it reads TFGGGLGGAVGGRRRRDIGGGLGGAVGGRRRRDIGGGLGGAVGGKS. Repeat copies occupy residues 22-37 and 38-53. A Glycine amide modification is found at Gly31. The propeptide occupies 33–37; it reads RRRRD. Glycine amide is present on Gly47. Residues 49 to 53 constitute a propeptide that is removed on maturation; sequence RRRRD. Residues 54 to 64 form a 3; half-length repeat; it reads IGGGLGGAVGG.

Belongs to the limacoditoxin-59 family. In terms of tissue distribution, expressed by the venom secretory cell of the spine. The spine is a cuticular structure containing a single large nucleated venom-secreting cell at its base. It is an independent unit capable of producing, storing and injecting venom. On the back of D.vulnerans caterpillars, spines are grouped together by 50 to 100 to form scoli, of which there are eight in D.vulnerans.

The protein localises to the secreted. Its function is as follows. Probable toxin. This Doratifera vulnerans (Mottled cup moth) protein is U-limacoditoxin(59)-Dv128.